The chain runs to 847 residues: Pollen-specific leucine-rich repeat extensin-like protein 2 (847 aa).

An N-terminal signal peptide occupies residues 1-20 (MERPFGCFFILLLISYTVVA). LRR repeat units follow at residues 45 to 71 (INKVDPNLKFENDRLKRAYIALQAWKK), 106 to 130 (LTVVAGVDLNHADIAGHLPPELGLM), 131 to 153 (TDLALFHINSNRFCGIIPKSLSK), 155 to 178 (ALMYEFDVSNNRFVGQFPEVSLSW), 179 to 202 (PSLKFLDLRYNEFEGSLPSEIFDK), 204 to 224 (LDAIFLNNNRFESVIPGTIGK), 226 to 248 (KASVVTFANNKFSGCIPKSIGNM), and 249 to 273 (KNLNEIVFTGNNLTGCFPNEIGLLN). Residues asparagine 260 and asparagine 274 are each glycosylated (N-linked (GlcNAc...) asparagine). LRR repeat units follow at residues 296–319 (LASVEQLDLSHNKLTGFVVDKFCK) and 321–343 (PNLDSFKFSYNFFNGEAESCVPG). The segment at 381 to 847 (KDKCSGGSNG…SPPPPMFQGY (467 aa)) is disordered. The span at 438-484 (PKHESPKPEEPENKHELPKQKESPKPQPSKPEDSPKPEQPKPEESPK) shows a compositional bias: basic and acidic residues. Pro residues-rich tracts occupy residues 485–499 (PEQPQIPEPTKPVSP) and 533–642 (VPPP…PPPT). Residues 522–847 (SPPPPKVEDT…SPPPPMFQGY (326 aa)) form a contains the Ser-Pro(4) repeats region. 3 stretches are compositionally biased toward polar residues: residues 667-682 (QVPTPSSESDQSQILS), 688-720 (TPVQSSTPSSEPTQVPTPSSSESYQAPNLSPVQ), and 726-752 (QAPTTSSETSQVPTPSSESNQSPSQAP). 2 stretches are compositionally biased toward low complexity: residues 768 to 783 (PVQSPTPSSEPVSSPE) and 797 to 811 (NPSSVPSSSPSTDTS). Pro residues predominate over residues 838–847 (SPPPPMFQGY).

Post-translationally, hydroxylated on proline residues in the S-P-P-P-P repeat. In terms of processing, O-glycosylated on hydroxyprolines. As to expression, expressed in flowers, stamen, pollen, and pollinated carpels (at protein level).

Its subcellular location is the secreted. The protein resides in the cell wall. Modulates cell morphogenesis by regulating cell wall formation and assembly, and/or growth polarization. The chain is Pollen-specific leucine-rich repeat extensin-like protein 2 (PEX2) from Arabidopsis thaliana (Mouse-ear cress).